A 75-amino-acid polypeptide reads, in one-letter code: uncharacterized protein (75 aa).

This is an uncharacterized protein from Mycobacterium tuberculosis (strain CDC 1551 / Oshkosh).